We begin with the raw amino-acid sequence, 123 residues long: MDNKTYEISSAEWEFMNIIWMKKYASANNIIEEIQMQKDWSPKTIRTLITRLYKKGFIDRKKDNKIFQYYSLVEESDIKYKTSKNFINKVYKGGFNSLVLNFVEKEDLSQDEIEELRNILNKK.

A DNA-binding region (H-T-H motif) is located at residues 7–71 (EISSAEWEFM…KDNKIFQYYS (65 aa)). The important for dimerization stretch occupies residues 74–123 (EESDIKYKTSKNFINKVYKGGFNSLVLNFVEKEDLSQDEIEELRNILNKK).

It belongs to the BlaI transcriptional regulatory family. In terms of assembly, monomer and homodimer. Upon exposure to beta-lactams, proteolytic cleavage at a single site impairs dimerization and abolishes repressor activity.

It localises to the cytoplasm. Functionally, transcriptional repressor that constitutively blocks the transcription of the gene for the penicillin-binding protein MecA. Binds DNA as a dimer. The protein is Methicillin resistance regulatory protein MecI (mecI) of Staphylococcus aureus (strain Mu50 / ATCC 700699).